A 372-amino-acid chain; its full sequence is Chaperone protein DnaJ (372 aa).

The J domain maps to 5 to 70; it reads DYYEVLGVSK…QKRAAYDQYG (66 aa). Residues 127–205 form a CR-type zinc finger; that stretch reads GVTKEIRIPT…CHGHGRVERY (79 aa). The Zn(2+) site is built by C140, C143, C157, C160, C179, C182, C193, and C196. 4 CXXCXGXG motif repeats span residues 140 to 147, 157 to 164, 179 to 186, and 193 to 200; these read CDICHGSG, CSTCQGAG, CPHCHGRG, and CHKCHGHG.

This sequence belongs to the DnaJ family. In terms of assembly, homodimer. Zn(2+) serves as cofactor.

The protein resides in the cytoplasm. Functionally, participates actively in the response to hyperosmotic and heat shock by preventing the aggregation of stress-denatured proteins and by disaggregating proteins, also in an autonomous, DnaK-independent fashion. Unfolded proteins bind initially to DnaJ; upon interaction with the DnaJ-bound protein, DnaK hydrolyzes its bound ATP, resulting in the formation of a stable complex. GrpE releases ADP from DnaK; ATP binding to DnaK triggers the release of the substrate protein, thus completing the reaction cycle. Several rounds of ATP-dependent interactions between DnaJ, DnaK and GrpE are required for fully efficient folding. Also involved, together with DnaK and GrpE, in the DNA replication of plasmids through activation of initiation proteins. The sequence is that of Chaperone protein DnaJ from Photorhabdus laumondii subsp. laumondii (strain DSM 15139 / CIP 105565 / TT01) (Photorhabdus luminescens subsp. laumondii).